We begin with the raw amino-acid sequence, 142 residues long: MVLSAADKGHVKGIWGKVGGHAGEYAAEGLERTFHSFPTTKTYFPHFDLSHGSAQIQAHGKKIADALGQAVEHIDDLPGTLSKLSDLHAHKLRVDPVNFKLLSHCLLVTFAAHLGDAFTPEVHASLDKFLAAVSTVLTSKYR.

One can recognise a Globin domain in the interval 2–142 (VLSAADKGHV…VSTVLTSKYR (141 aa)). Ser-4 bears the Phosphoserine mark. Residues Lys-8 and Lys-12 each carry the N6-succinyllysine modification. Lys-17 is modified (N6-acetyllysine; alternate). Lys-17 is modified (N6-succinyllysine; alternate). Tyr-25 bears the Phosphotyrosine mark. At Ser-36 the chain carries Phosphoserine. Lys-41 is subject to N6-succinyllysine. Ser-50 carries the post-translational modification Phosphoserine. An O2-binding site is contributed by His-59. Residue His-88 coordinates heme b. Ser-103 is modified (phosphoserine). A Phosphothreonine modification is found at Thr-109. A Phosphoserine modification is found at Ser-125. A phosphothreonine mark is found at Thr-135 and Thr-138. Ser-139 is modified (phosphoserine).

It belongs to the globin family. Heterotetramer of two alpha chains and two beta chains. As to expression, red blood cells.

Functionally, involved in oxygen transport from the lung to the various peripheral tissues. Its function is as follows. Hemopressin acts as an antagonist peptide of the cannabinoid receptor CNR1. Hemopressin-binding efficiently blocks cannabinoid receptor CNR1 and subsequent signaling. The polypeptide is Hemoglobin subunit alpha (HBA) (Notamacropus eugenii (Tammar wallaby)).